Reading from the N-terminus, the 171-residue chain is S-ribosylhomocysteine lyase (171 aa).

The Fe cation site is built by His-54, His-58, and Cys-128.

Belongs to the LuxS family. As to quaternary structure, homodimer. Fe cation is required as a cofactor.

The catalysed reaction is S-(5-deoxy-D-ribos-5-yl)-L-homocysteine = (S)-4,5-dihydroxypentane-2,3-dione + L-homocysteine. In terms of biological role, involved in the synthesis of autoinducer 2 (AI-2) which is secreted by bacteria and is used to communicate both the cell density and the metabolic potential of the environment. The regulation of gene expression in response to changes in cell density is called quorum sensing. Catalyzes the transformation of S-ribosylhomocysteine (RHC) to homocysteine (HC) and 4,5-dihydroxy-2,3-pentadione (DPD). This Salmonella arizonae (strain ATCC BAA-731 / CDC346-86 / RSK2980) protein is S-ribosylhomocysteine lyase.